Reading from the N-terminus, the 315-residue chain is Porphobilinogen deaminase (315 aa).

At cysteine 241 the chain carries S-(dipyrrolylmethanemethyl)cysteine.

This sequence belongs to the HMBS family. As to quaternary structure, monomer. Dipyrromethane is required as a cofactor.

The enzyme catalyses 4 porphobilinogen + H2O = hydroxymethylbilane + 4 NH4(+). Its pathway is porphyrin-containing compound metabolism; protoporphyrin-IX biosynthesis; coproporphyrinogen-III from 5-aminolevulinate: step 2/4. Its function is as follows. Tetrapolymerization of the monopyrrole PBG into the hydroxymethylbilane pre-uroporphyrinogen in several discrete steps. This Nitratidesulfovibrio vulgaris (strain DP4) (Desulfovibrio vulgaris) protein is Porphobilinogen deaminase.